A 1104-amino-acid chain; its full sequence is Lon protease homolog, mitochondrial (1104 aa).

The N-terminal 54 residues, 1–54, are a transit peptide targeting the mitochondrion; sequence MLRGQTLRWRAALQTPRSLILRPLFAPGGYNVGPRSVLETSRRFRSLPPSLRTF. 2 disordered regions span residues 41-192 and 296-317; these read SRRF…KPSV and SLIPPGDSTKSGNSEDKTTEKR. Composition is skewed to basic and acidic residues over residues 64–104 and 125–144; these read KPPP…DSSG and KAADRDQRSVTEDAKREAEA. Residues 158–169 show a composition bias toward low complexity; that stretch reads SDSSSESKPSGS. Basic and acidic residues-rich tracts occupy residues 172–187 and 308–317; these read GGDDGGKKGKKNDKAL and NSEDKTTEKR. Residues 199–451 form the Lon N-terminal domain; the sequence is VMAIPIAKRP…KGLVVLKKEL (253 aa). 604-611 contributes to the ATP binding site; the sequence is GPPGVGKT. Basic and acidic residues predominate over residues 825-839; sequence AEGKAAQEESEKETG. Residues 825–857 are disordered; it reads AEGKAAQEESEKETGPIESTSEQEKATTENPRV. The Lon proteolytic domain occupies 891 to 1077; it reads TFPPGVTMGL…SEVFDILFAD (187 aa). Residues Ser-983 and Lys-1026 contribute to the active site.

It belongs to the peptidase S16 family. Homohexamer or homoheptamer. Organized in a ring with a central cavity.

Its subcellular location is the mitochondrion matrix. It catalyses the reaction Hydrolysis of proteins in presence of ATP.. Functionally, ATP-dependent serine protease that mediates the selective degradation of misfolded, unassembled or oxidatively damaged polypeptides as well as certain short-lived regulatory proteins in the mitochondrial matrix. May also have a chaperone function in the assembly of inner membrane protein complexes. Participates in the regulation of mitochondrial gene expression and in the maintenance of the integrity of the mitochondrial genome. Binds to mitochondrial DNA in a site-specific manner. This chain is Lon protease homolog, mitochondrial (pim1), found in Emericella nidulans (strain FGSC A4 / ATCC 38163 / CBS 112.46 / NRRL 194 / M139) (Aspergillus nidulans).